The following is a 226-amino-acid chain: V-type proton ATPase subunit E (226 aa).

This sequence belongs to the V-ATPase E subunit family. In terms of assembly, V-ATPase is a heteromultimeric enzyme composed of a peripheral catalytic V1 complex (components A to H) attached to an integral membrane V0 proton pore complex (components: a, c, c', c'' and d).

Functionally, subunit of the peripheral V1 complex of vacuolar ATPase essential for assembly or catalytic function. V-ATPase is responsible for acidifying a variety of intracellular compartments in eukaryotic cells. The protein is V-type proton ATPase subunit E (VATE) of Mesembryanthemum crystallinum (Common ice plant).